Consider the following 495-residue polypeptide: Divinyl ether synthase CYP74M3 (495 aa).

Cys-446 is a heme binding site.

It belongs to the cytochrome P450 family. The cofactor is heme.

It carries out the reaction (13S)-hydroperoxy-(9Z,11E)-octadecadienoate = etheroleate + H2O. It catalyses the reaction (13S)-hydroperoxy-(9Z,11E,15Z)-octadecatrienoate = etherolenate + H2O. It participates in lipid metabolism; oxylipin biosynthesis. Functionally, divinyl ether synthase involved in oxylipin biosynthesis. Catalyzes the conversion of (13S)-hydroperoxy-(9Z,11E)-octadecadienoate (13-HPOD) to etheroleate and (13S)-hydroperoxy-(9Z,11E,15Z)-octadecatrienoate (13-HPOT) to etherolenate. Has no activity with the corresponding 9-hydroperoxides (9-HPOD and 9-HPOT). The chain is Divinyl ether synthase CYP74M3 from Selaginella moellendorffii (Spikemoss).